A 110-amino-acid polypeptide reads, in one-letter code: UPF0060 membrane protein PFL_4337 (110 aa).

A run of 4 helical transmembrane segments spans residues 5–25, 31–51, 59–79, and 84–104; these read LWFFLAALFEIAGCYAFWMWL, ALWVIPALVSLTLFALLLTKV, AYAAYGGIYIVASIGWLAVVE, and LGSDWLGLALCVIGASVILFG.

Belongs to the UPF0060 family.

Its subcellular location is the cell inner membrane. The polypeptide is UPF0060 membrane protein PFL_4337 (Pseudomonas fluorescens (strain ATCC BAA-477 / NRRL B-23932 / Pf-5)).